The chain runs to 266 residues: Protein STAY-GREEN homolog, chloroplastic (266 aa).

The N-terminal 50 residues, 1-50, are a transit peptide targeting the chloroplast; it reads MGTLTASLVAPSKLNPEKHSSLFVYKTRRKSHKNQSIVPVARLFGPAIFE.

It belongs to the staygreen family.

The protein resides in the plastid. The protein localises to the chloroplast. Required to trigger chlorophyll degradation during leaf senescence and fruit ripening. The chain is Protein STAY-GREEN homolog, chloroplastic from Capsicum annuum (Capsicum pepper).